A 22-amino-acid chain; its full sequence is thr operon leader peptide (22 aa).

This sequence belongs to the thr operon leader peptide family.

Functionally, this protein is involved in control of the biosynthesis of threonine. This Klebsiella pneumoniae (strain 342) protein is thr operon leader peptide.